Here is a 531-residue protein sequence, read N- to C-terminus: Probable peptide ABC transporter periplasmic-binding protein y4tO (531 aa).

Residues 1–32 constitute a signal peptide (tat-type signal); sequence MTISRRDLFKAGLAAGAALSVPSLLRAQTAVA.

The protein belongs to the bacterial solute-binding protein 5 family. In terms of processing, predicted to be exported by the Tat system. The position of the signal peptide cleavage has not been experimentally proven.

It is found in the periplasm. Functionally, probably part of the binding-protein-dependent transport system y4tOPQRS for a peptide. This is Probable peptide ABC transporter periplasmic-binding protein y4tO from Sinorhizobium fredii (strain NBRC 101917 / NGR234).